Reading from the N-terminus, the 718-residue chain is MSVPAIAVYTSPPGAVYTSSSSSELEASSRGSAPCATAAPPSPASSHRHQAIAGGLSCLFSSPTAAPRAAAAQDELGALWHDRSGEATAVGGGGGGGGYSYPQPSSPFKWRDMLHHSPVPLFHSPASSPASRSPSASWLAGRERERLFSSFVRNALGSCVDYAPVAALPLGVSAAVGVGAGELAFELDEHLSEAEPSCEPYARDLLAGAQARHRIFHDELVVKAFFEAERAHRGQTRASGDPYLQHCVETAVLLAKIGANATVVSAGLLHDTIDDSFMDYDQIFRMFGAGVADLVEGVSKLSHLSKLARDNNTASRTVEADRLHTMFLAMADARAVLIKLADRLHNMKTIEALPLVKQQRFAKETMEIFVPLANRLGIASWKDQLENICFKHLNPEEHKELSSKLVISFDEALLTSTLDKLDKGLRDEGISYHSLSGRHKSLYSIYSKMIKKNLTMDDVHDIHGLRLVVDTEQDCYQALDIVHKLWPRVAGRFKDYILHPKLNGYRSLHTVIMCEGIHPFEVQIRTKEMHLQAEYGFAAHWRYKEGGCKHSFVLQMVEWARWVLTWQCEAMSKERSSGLGRSDAIRPPCPFPSHSEDCPYSYTRQCNHDGPIFVIMLEHDKMSVQELPANSTVVDLMERVGANSPRCSPYSFPLKEELRPRVNHKPISDPNRKLCMGDVVELTPALPHKSLTEYREEIQRMYERGGFALATTRDGPAS.

The N-terminal 68 residues, methionine 1 to arginine 68, are a transit peptide targeting the chloroplast. The tract at residues tyrosine 9–arginine 48 is disordered. A compositionally biased stretch (low complexity) spans serine 19–alanine 39. The HD domain maps to tyrosine 243–methionine 347.

Belongs to the RelA/SpoT family.

It localises to the plastid. The protein resides in the chloroplast. The enzyme catalyses GTP + ATP = guanosine 3'-diphosphate 5'-triphosphate + AMP. Probable ppGpp (guanosine 3'-diphosphate 5'-diphosphate) synthetase that may be involved in a rapid plant ppGpp-mediated response to pathogens and other stresses. The sequence is that of Probable GTP diphosphokinase RSH2, chloroplastic (RSH2) from Oryza sativa subsp. japonica (Rice).